A 48-amino-acid polypeptide reads, in one-letter code: MGINKKDGQPQYAPSHLGTKPVKYKRNKGEKFHDKSNGHPIVMQTKGE.

The tract at residues 1 to 48 (MGINKKDGQPQYAPSHLGTKPVKYKRNKGEKFHDKSNGHPIVMQTKGE) is disordered. Residues 27-37 (NKGEKFHDKSN) are compositionally biased toward basic and acidic residues.

It belongs to the SspN family.

Its subcellular location is the spore core. This chain is Small, acid-soluble spore protein N, found in Bacillus velezensis (strain DSM 23117 / BGSC 10A6 / LMG 26770 / FZB42) (Bacillus amyloliquefaciens subsp. plantarum).